Reading from the N-terminus, the 224-residue chain is Deoxyguanosine kinase (224 aa).

8–16 is a binding site for ATP; that stretch reads GPIGAGKSS. Residues Glu-32, Tyr-44, and Gln-55 each coordinate substrate. The active-site Proton acceptor is the Asp-78. Substrate contacts are provided by Arg-79, Asp-84, and Glu-149.

This sequence belongs to the DCK/DGK family. Heterodimer of a deoxyadenosine (DAK) and a deoxyguanosine kinase (DGK).

The enzyme catalyses 2'-deoxyguanosine + ATP = dGMP + ADP + H(+). In terms of biological role, DGK/DAK plays an essential role in generating the deoxyribonucleotide precursors, dGTP and dATP, for DNA metabolism. The polypeptide is Deoxyguanosine kinase (Lactobacillus johnsonii (strain CNCM I-12250 / La1 / NCC 533)).